Reading from the N-terminus, the 288-residue chain is ATP synthase gamma chain (288 aa).

This sequence belongs to the ATPase gamma chain family. F-type ATPases have 2 components, CF(1) - the catalytic core - and CF(0) - the membrane proton channel. CF(1) has five subunits: alpha(3), beta(3), gamma(1), delta(1), epsilon(1). CF(0) has three main subunits: a, b and c.

It is found in the cell inner membrane. Its function is as follows. Produces ATP from ADP in the presence of a proton gradient across the membrane. The gamma chain is believed to be important in regulating ATPase activity and the flow of protons through the CF(0) complex. This is ATP synthase gamma chain from Rickettsia felis (strain ATCC VR-1525 / URRWXCal2) (Rickettsia azadi).